Consider the following 313-residue polypeptide: MGNELQHRTVLLDEAVDSLVTRPDGIYVDGTFGRGGHSRAVLARLAPGGRLIAFDKDPRAIETAQRIEDARFSIVHDSFASMRDALAARGVEKVSGVLLDLGVSSPQVDDPARGFSFRADGPLDMRMDPTRGESAAEWLARASVQELTEVIRDYGEERFAFQIAKALVARRAESDRLGPLDTTGELAQIVGHVVKTREKGKDPATRTFQAIRIHVNQELADLQVVLDAALSLLEQGGRLVVISFHSLEDRIVKRFMQAHASAPAVDRRLPIRAVDLPSPPLKIISRQFPSEAEVAANPRARSAVMRIAERVTP.

S-adenosyl-L-methionine contacts are provided by residues 35 to 37 (GGH), Asp-55, Phe-79, Asp-100, and Gln-107.

The protein belongs to the methyltransferase superfamily. RsmH family.

The protein resides in the cytoplasm. The enzyme catalyses cytidine(1402) in 16S rRNA + S-adenosyl-L-methionine = N(4)-methylcytidine(1402) in 16S rRNA + S-adenosyl-L-homocysteine + H(+). In terms of biological role, specifically methylates the N4 position of cytidine in position 1402 (C1402) of 16S rRNA. The protein is Ribosomal RNA small subunit methyltransferase H of Burkholderia vietnamiensis (strain G4 / LMG 22486) (Burkholderia cepacia (strain R1808)).